The following is a 164-amino-acid chain: MENYQGQHGYGADRVDVYGNPVAGQYGGGATAPGGGHGVMGMGGHHAGAGGQFQPVKEEHKTGGILHRSGSSSSSSSSEDDGMGGRRKKGIKEKIKEKLPGGNKGNNQQQQQMMGNTGGAYGQQGHAGMTGAGTGTGVHGAEYGNTGEKKGFMDKIKEKLPGQH.

A compositionally biased stretch (gly residues) spans 42-51 (MGGHHAGAGG). A disordered region spans residues 42–164 (MGGHHAGAGG…KIKEKLPGQH (123 aa)). Residues 105–115 (GNNQQQQQMMG) show a composition bias toward low complexity. The segment covering 128 to 138 (GMTGAGTGTGV) has biased composition (gly residues). Positions 147–164 (GEKKGFMDKIKEKLPGQH) are enriched in basic and acidic residues.

It belongs to the plant dehydrin family.

This is Dehydrin Rab16C (RAB16C) from Oryza sativa subsp. japonica (Rice).